A 129-amino-acid chain; its full sequence is Large ribosomal subunit protein bL12c (129 aa).

Residues Lys-101–Gly-123 are compositionally biased toward basic and acidic residues. A disordered region spans residues Lys-101–Lys-129.

The protein belongs to the bacterial ribosomal protein bL12 family. As to quaternary structure, homodimer. Part of the ribosomal stalk of the 50S ribosomal subunit. Forms a multimeric L10(L12)X complex, where L10 forms an elongated spine to which 2 to 4 L12 dimers bind in a sequential fashion. Binds GTP-bound translation factors.

The protein resides in the plastid. It is found in the chloroplast. Its function is as follows. Forms part of the ribosomal stalk which helps the ribosome interact with GTP-bound translation factors. Is thus essential for accurate translation. The protein is Large ribosomal subunit protein bL12c of Guillardia theta (Cryptophyte).